Here is a 217-residue protein sequence, read N- to C-terminus: 3-isopropylmalate dehydratase small subunit (217 aa).

This sequence belongs to the LeuD family. LeuD type 1 subfamily. Heterodimer of LeuC and LeuD.

It carries out the reaction (2R,3S)-3-isopropylmalate = (2S)-2-isopropylmalate. It participates in amino-acid biosynthesis; L-leucine biosynthesis; L-leucine from 3-methyl-2-oxobutanoate: step 2/4. Its function is as follows. Catalyzes the isomerization between 2-isopropylmalate and 3-isopropylmalate, via the formation of 2-isopropylmaleate. The protein is 3-isopropylmalate dehydratase small subunit of Paraburkholderia phymatum (strain DSM 17167 / CIP 108236 / LMG 21445 / STM815) (Burkholderia phymatum).